We begin with the raw amino-acid sequence, 678 residues long: Glycine--tRNA ligase beta subunit (678 aa).

The protein belongs to the class-II aminoacyl-tRNA synthetase family. As to quaternary structure, tetramer of two alpha and two beta subunits.

The protein resides in the cytoplasm. The catalysed reaction is tRNA(Gly) + glycine + ATP = glycyl-tRNA(Gly) + AMP + diphosphate. This chain is Glycine--tRNA ligase beta subunit, found in Streptococcus suis (strain 98HAH33).